A 440-amino-acid chain; its full sequence is Proline--tRNA ligase (440 aa).

Belongs to the class-II aminoacyl-tRNA synthetase family. ProS type 2 subfamily. As to quaternary structure, homodimer.

It is found in the cytoplasm. It carries out the reaction tRNA(Pro) + L-proline + ATP = L-prolyl-tRNA(Pro) + AMP + diphosphate. Its function is as follows. Catalyzes the attachment of proline to tRNA(Pro) in a two-step reaction: proline is first activated by ATP to form Pro-AMP and then transferred to the acceptor end of tRNA(Pro). This Rhizobium johnstonii (strain DSM 114642 / LMG 32736 / 3841) (Rhizobium leguminosarum bv. viciae) protein is Proline--tRNA ligase.